Consider the following 416-residue polypeptide: S-adenosylmethionine synthase (416 aa).

H14 provides a ligand contact to ATP. D16 serves as a coordination point for Mg(2+). Residue E42 participates in K(+) binding. The L-methionine site is built by E55 and Q98. The segment at 98–108 is flexible loop; the sequence is QSADINQGVDR. ATP is bound by residues 164 to 166, 240 to 241, D249, 255 to 256, A272, and K276; these read DAK, KF, and RK. D249 lines the L-methionine pocket. K280 contacts L-methionine.

The protein belongs to the AdoMet synthase family. Homotetramer; dimer of dimers. Mg(2+) serves as cofactor. The cofactor is K(+).

It localises to the cytoplasm. The enzyme catalyses L-methionine + ATP + H2O = S-adenosyl-L-methionine + phosphate + diphosphate. Its pathway is amino-acid biosynthesis; S-adenosyl-L-methionine biosynthesis; S-adenosyl-L-methionine from L-methionine: step 1/1. In terms of biological role, catalyzes the formation of S-adenosylmethionine (AdoMet) from methionine and ATP. The overall synthetic reaction is composed of two sequential steps, AdoMet formation and the subsequent tripolyphosphate hydrolysis which occurs prior to release of AdoMet from the enzyme. The protein is S-adenosylmethionine synthase of Flavobacterium psychrophilum (strain ATCC 49511 / DSM 21280 / CIP 103535 / JIP02/86).